A 257-amino-acid polypeptide reads, in one-letter code: Staphylococcal secretory antigen SsaA (257 aa).

An N-terminal signal peptide occupies residues 1-26 (MKKIATATIATAGIATFAFAHHDAQA). 8 consecutive repeat copies span residues 73-75 (YNN), 76-78 (YNN), 84-86 (YNN), 87-89 (YSN), 90-92 (YNN), 93-95 (YSN), 96-98 (YNN), and 99-101 (YNN). Residues 73-101 (YNNYNNYNYYGYNNYSNYNNYSNYNNYNN) form an 8 X 3 AA repeats of Y-[NS]-N region. A disordered region spans residues 101-144 (NYQSNNTQSQRTTQPTGGLGASYSTSSSNVHVTTTSAPSSNGVS). Residues 107–116 (TQSQRTTQPT) are compositionally biased toward polar residues. The segment covering 122 to 136 (SYSTSSSNVHVTTTS) has biased composition (low complexity). The Peptidase C51 domain maps to 136–257 (SAPSSNGVSL…SQAASYNYIH (122 aa)).

The protein resides in the secreted. In terms of biological role, not known; immunogenic protein expressed during sepsis and particularly during episodes of infective endocarditis. This is Staphylococcal secretory antigen SsaA (ssaA) from Staphylococcus epidermidis.